A 187-amino-acid chain; its full sequence is Elongation factor P (187 aa).

The protein belongs to the elongation factor P family.

The protein resides in the cytoplasm. It participates in protein biosynthesis; polypeptide chain elongation. Its function is as follows. Involved in peptide bond synthesis. Stimulates efficient translation and peptide-bond synthesis on native or reconstituted 70S ribosomes in vitro. Probably functions indirectly by altering the affinity of the ribosome for aminoacyl-tRNA, thus increasing their reactivity as acceptors for peptidyl transferase. The protein is Elongation factor P of Helicobacter pylori (strain P12).